The chain runs to 514 residues: Membrane-bound lytic murein transglycosylase F (514 aa).

A signal peptide spans 1–30 (MKKLKINYLFIGILTLLLAAALWPSIPWFG). A non-LT domain region spans residues 31-269 (KTENHIAAIQ…RIEEKYLGHG (239 aa)). The interval 270–514 (DDFDYVDTRS…LFTPQKKEEK (245 aa)) is LT domain. Glu314 is a catalytic residue.

It in the N-terminal section; belongs to the bacterial solute-binding protein 3 family. This sequence in the C-terminal section; belongs to the transglycosylase Slt family.

It is found in the cell outer membrane. It catalyses the reaction Exolytic cleavage of the (1-&gt;4)-beta-glycosidic linkage between N-acetylmuramic acid (MurNAc) and N-acetylglucosamine (GlcNAc) residues in peptidoglycan, from either the reducing or the non-reducing ends of the peptidoglycan chains, with concomitant formation of a 1,6-anhydrobond in the MurNAc residue.. Its function is as follows. Murein-degrading enzyme that degrades murein glycan strands and insoluble, high-molecular weight murein sacculi, with the concomitant formation of a 1,6-anhydromuramoyl product. Lytic transglycosylases (LTs) play an integral role in the metabolism of the peptidoglycan (PG) sacculus. Their lytic action creates space within the PG sacculus to allow for its expansion as well as for the insertion of various structures such as secretion systems and flagella. This is Membrane-bound lytic murein transglycosylase F from Salmonella paratyphi A (strain ATCC 9150 / SARB42).